The sequence spans 156 residues: Small ribosomal subunit protein uS7 (156 aa).

This sequence belongs to the universal ribosomal protein uS7 family. In terms of assembly, part of the 30S ribosomal subunit. Contacts proteins S9 and S11.

One of the primary rRNA binding proteins, it binds directly to 16S rRNA where it nucleates assembly of the head domain of the 30S subunit. Is located at the subunit interface close to the decoding center, probably blocks exit of the E-site tRNA. This chain is Small ribosomal subunit protein uS7, found in Magnetococcus marinus (strain ATCC BAA-1437 / JCM 17883 / MC-1).